The following is a 305-amino-acid chain: tRNA pseudouridine synthase B (305 aa).

The active-site Nucleophile is D38.

The protein belongs to the pseudouridine synthase TruB family. Type 1 subfamily.

It catalyses the reaction uridine(55) in tRNA = pseudouridine(55) in tRNA. Its function is as follows. Responsible for synthesis of pseudouridine from uracil-55 in the psi GC loop of transfer RNAs. The polypeptide is tRNA pseudouridine synthase B (Latilactobacillus sakei subsp. sakei (strain 23K) (Lactobacillus sakei subsp. sakei)).